The following is a 294-amino-acid chain: Acetyl-coenzyme A carboxylase carboxyl transferase subunit beta (294 aa).

The region spanning I25–E294 is the CoA carboxyltransferase N-terminal domain. Zn(2+) is bound by residues C29, C32, C48, and C51. The segment at C29–C51 adopts a C4-type zinc-finger fold.

The protein belongs to the AccD/PCCB family. Acetyl-CoA carboxylase is a heterohexamer composed of biotin carboxyl carrier protein (AccB), biotin carboxylase (AccC) and two subunits each of ACCase subunit alpha (AccA) and ACCase subunit beta (AccD). It depends on Zn(2+) as a cofactor.

It is found in the cytoplasm. It catalyses the reaction N(6)-carboxybiotinyl-L-lysyl-[protein] + acetyl-CoA = N(6)-biotinyl-L-lysyl-[protein] + malonyl-CoA. It functions in the pathway lipid metabolism; malonyl-CoA biosynthesis; malonyl-CoA from acetyl-CoA: step 1/1. Functionally, component of the acetyl coenzyme A carboxylase (ACC) complex. Biotin carboxylase (BC) catalyzes the carboxylation of biotin on its carrier protein (BCCP) and then the CO(2) group is transferred by the transcarboxylase to acetyl-CoA to form malonyl-CoA. This Blochmanniella pennsylvanica (strain BPEN) protein is Acetyl-coenzyme A carboxylase carboxyl transferase subunit beta.